The sequence spans 461 residues: Probable protein phosphatase 2C 40 (461 aa).

The disordered stretch occupies residues 34-63 (REASAERASASASAGAGGRERERRPSVAAG). Positions 57-321 (RPSVAAGQAC…DDTTCIVIDI (265 aa)) constitute a PPM-type phosphatase domain. Mn(2+)-binding residues include Asp-98, Gly-99, Asp-273, and Asp-312. A compositionally biased stretch (basic and acidic residues) spans 439-453 (KKEAMEGKRHSRDSS). Residues 439–461 (KKEAMEGKRHSRDSSSRNSGSSE) form a disordered region.

The protein belongs to the PP2C family. Requires Mg(2+) as cofactor. The cofactor is Mn(2+). Expressed in leaves, leaf sheaths, panicles, nodes and internodes. Expressed at low levels in roots and stems.

The protein resides in the nucleus. The protein localises to the cytoplasm. The enzyme catalyses O-phospho-L-seryl-[protein] + H2O = L-seryl-[protein] + phosphate. It catalyses the reaction O-phospho-L-threonyl-[protein] + H2O = L-threonyl-[protein] + phosphate. Mediates the negative regulation of osmotic and salt stress tolerance through regulation of the jasmonate and abscisic acid signaling pathways and modulation of the raffinose family oligosaccharide metabolism pathway. This is Probable protein phosphatase 2C 40 from Oryza sativa subsp. japonica (Rice).